A 329-amino-acid chain; its full sequence is L-lactate dehydrogenase (329 aa).

NAD(+)-binding positions include Val-18, Glu-39, Lys-46, Tyr-71, and 85-86; that span reads GA. Residues Gln-88 and Arg-94 each contribute to the substrate site. NAD(+)-binding positions include Ser-107, 124–126, and Ser-149; that span reads AAN. Residue 126 to 129 participates in substrate binding; sequence NPVD. Residue 154–157 participates in substrate binding; sequence DSAR. Residues Arg-159 and His-174 each coordinate beta-D-fructose 1,6-bisphosphate. His-181 serves as the catalytic Proton acceptor. Phosphotyrosine is present on Tyr-226. Thr-235 provides a ligand contact to substrate.

This sequence belongs to the LDH/MDH superfamily. LDH family. Homotetramer.

The protein localises to the cytoplasm. It carries out the reaction (S)-lactate + NAD(+) = pyruvate + NADH + H(+). The protein operates within fermentation; pyruvate fermentation to lactate; (S)-lactate from pyruvate: step 1/1. Allosterically activated by fructose 1,6-bisphosphate (FBP). In terms of biological role, catalyzes the conversion of lactate to pyruvate. This is L-lactate dehydrogenase from Streptococcus agalactiae serotype V (strain ATCC BAA-611 / 2603 V/R).